The following is a 215-amino-acid chain: 3-demethoxyubiquinol 3-hydroxylase (215 aa).

The Fe cation site is built by Glu-64, Glu-94, His-97, Glu-146, Glu-178, and His-181.

This sequence belongs to the COQ7 family. It depends on Fe cation as a cofactor.

It localises to the cell membrane. The enzyme catalyses a 5-methoxy-2-methyl-3-(all-trans-polyprenyl)benzene-1,4-diol + AH2 + O2 = a 3-demethylubiquinol + A + H2O. Its pathway is cofactor biosynthesis; ubiquinone biosynthesis. Its function is as follows. Catalyzes the hydroxylation of 2-nonaprenyl-3-methyl-6-methoxy-1,4-benzoquinol during ubiquinone biosynthesis. The polypeptide is 3-demethoxyubiquinol 3-hydroxylase (Coxiella burnetii (strain CbuG_Q212) (Coxiella burnetii (strain Q212))).